Reading from the N-terminus, the 254-residue chain is rRNA N-glycosylase sapovaccarin-S2 (254 aa).

The protein belongs to the ribosome-inactivating protein family. Type 1 RIP subfamily. As to expression, expressed in seeds; most abundant in the perisperm.

The catalysed reaction is Endohydrolysis of the N-glycosidic bond at one specific adenosine on the 28S rRNA.. Its function is as follows. Exhibits N-glycosylase activity. Catalyzes the release of one adenine from a ribosome. Acts as a ribosome-inactivating protein and inhibits protein synthesis. Induces cell death in Huh-7 liver cells. May contribute to the protection against plant pests and predators or play a role in regulating the death of plant cells. The protein is rRNA N-glycosylase sapovaccarin-S2 of Gypsophila vaccaria (Cow soapwort).